The following is a 696-amino-acid chain: Chitin synthase regulator SKT5 (696 aa).

2 disordered regions span residues 37–67 and 90–145; these read GQDF…SANQ and QEED…IKKR. A compositionally biased stretch (basic and acidic residues) spans 41–53; it reads SDNKENRENRDNE. Positions 104-126 are enriched in low complexity; it reads LNNSNNTSLSSLGSTPTNSPSPG. Positions 129 to 139 are enriched in polar residues; sequence RQTNSSTSLTK. The residue at position 148 (Ser148) is a Phosphoserine. Sel1-like repeat units lie at residues 271–306, 307–342, 343–382, 386–423, 424–460, 461–498, and 499–534; these read SDAQ…KHGH, IESA…SRNH, PSAM…ARAN, AAAP…SLGH, VPSA…LKGD, SVAM…NAGL, and PKAQ…GNED. Phosphoserine is present on residues Ser561 and Ser563. The residue at position 564 (Thr564) is a Phosphothreonine. Composition is skewed to polar residues over residues 576-593, 605-634, and 651-661; these read SNVG…TFFT, LQIN…SSAK, and VSLSNMGSSNM. The interval 576–696 is disordered; the sequence is SNVGSNSRVS…GKKKKDCVIM (121 aa). Residues 662-675 show a composition bias toward basic and acidic residues; the sequence is IRKDFPAVKTESKK. Basic residues predominate over residues 680–696; it reads KNKKDKQGKKKKDCVIM. Cys693 is subject to Cysteine methyl ester. A lipid anchor (S-farnesyl cysteine) is attached at Cys693. Residues 694–696 constitute a propeptide, removed in mature form; that stretch reads VIM.

It belongs to the SKT5 family. May interact with CHS3 and seems to be an adapter (along with BNI4) to link CHS3 to septins. Farnesylation is required for chitin synthase CHS3 activity but is not required for SKT5 membrane association.

The protein localises to the cell membrane. Activator of the chitin synthase CHS3 which polymerizes chitin, a structural polymer of the fungal cell wall. The sequence is that of Chitin synthase regulator SKT5 from Saccharomyces cerevisiae (strain ATCC 204508 / S288c) (Baker's yeast).